Reading from the N-terminus, the 226-residue chain is MSAPLTWHDVIGNEKEQPYFLDTLAYVAKERQAGKTIYPPQQDVFNAFRYTELADIKVVILGQDPYHGPNQAHGLSFSVQPGIPAPPSLVNMYKELASDIPDFQHPNHGCLISWAKQGVLLLNTVLTVERGNAHSHANLGWETFTDKVIAAINEHRSGVVFLLWGSHAQKKGYFIDANKHHVLKAPHPSPLSAHRGFFGCQHFSKANTLLEKQGIAPINWTPELPQ.

The Proton acceptor role is filled by aspartate 64.

The protein belongs to the uracil-DNA glycosylase (UDG) superfamily. UNG family.

It is found in the cytoplasm. The catalysed reaction is Hydrolyzes single-stranded DNA or mismatched double-stranded DNA and polynucleotides, releasing free uracil.. Functionally, excises uracil residues from the DNA which can arise as a result of misincorporation of dUMP residues by DNA polymerase or due to deamination of cytosine. This Photorhabdus laumondii subsp. laumondii (strain DSM 15139 / CIP 105565 / TT01) (Photorhabdus luminescens subsp. laumondii) protein is Uracil-DNA glycosylase.